We begin with the raw amino-acid sequence, 84 residues long: Toxin Ts4 (84 aa).

The signal sequence occupies residues 1–19 (MKRMILFISCLLLIDIVVG). The LCN-type CS-alpha/beta domain occupies 21-82 (REGYPADSKG…IWTSETNKCG (62 aa)). Cystine bridges form between C31–C81, C35–C57, C43–C62, and C47–C64. C81 carries the cysteine amide modification. A propeptide spanning residues 82 to 84 (GKK) is cleaved from the precursor.

This sequence belongs to the long (4 C-C) scorpion toxin superfamily. Sodium channel inhibitor family. Alpha subfamily. As to expression, expressed by the venom gland.

Its subcellular location is the secreted. Functionally, not toxic. Induces an immune response similar to that induced by whole venom. Induces a dose dependent release of the neurotransmitters glutamic acid and gamma aminobutyric acid from rat brain synaptosomes. Thus, polyclonal antibodies raised against this protein can neutralize the effects of the venom. In Tityus serrulatus (Brazilian scorpion), this protein is Toxin Ts4.